We begin with the raw amino-acid sequence, 510 residues long: 2,3-bisphosphoglycerate-independent phosphoglycerate mutase (510 aa).

Mn(2+) contacts are provided by aspartate 12 and serine 62. Serine 62 (phosphoserine intermediate) is an active-site residue. Substrate-binding positions include histidine 123, 153–154 (RD), arginine 185, arginine 191, 261–264 (RPDR), and lysine 336. Mn(2+) contacts are provided by aspartate 403, histidine 407, aspartate 444, histidine 445, and histidine 462.

Belongs to the BPG-independent phosphoglycerate mutase family. In terms of assembly, monomer. It depends on Mn(2+) as a cofactor.

The enzyme catalyses (2R)-2-phosphoglycerate = (2R)-3-phosphoglycerate. The protein operates within carbohydrate degradation; glycolysis; pyruvate from D-glyceraldehyde 3-phosphate: step 3/5. In terms of biological role, essential for rapid growth and for sporulation. Catalyzes the interconversion of 2-phosphoglycerate and 3-phosphoglycerate. In Priestia megaterium (strain ATCC 12872 / QMB1551) (Bacillus megaterium), this protein is 2,3-bisphosphoglycerate-independent phosphoglycerate mutase.